Reading from the N-terminus, the 720-residue chain is Exocyst complex component 7 (720 aa).

Coiled-coil stretches lie at residues 5–34 and 63–83; these read EDASARKREIEEKLKQEQETLSFIRESLEK and VHKQTENLQRLQENVDKTLSN. Ser-133 is subject to Phosphoserine. Residues 249-268 form a disordered region; that stretch reads SPAVQTKRKETPTKKAPKRP.

The protein belongs to the EXO70 family.

The protein resides in the cytoplasm. It is found in the cytosol. The protein localises to the cell membrane. It localises to the midbody. Its subcellular location is the midbody ring. In terms of biological role, component of the exocyst complex involved in the docking of exocytic vesicles with fusion sites on the plasma membrane. It is required for neuron survival and plays an essential role in telencephalon development. The protein is Exocyst complex component 7 (exoc7) of Danio rerio (Zebrafish).